A 511-amino-acid chain; its full sequence is Histidine ammonia-lyase (511 aa).

The segment at residues 142-144 (ASG) is a cross-link (5-imidazolinone (Ala-Gly)). 2,3-didehydroalanine (Ser) is present on Ser143.

Belongs to the PAL/histidase family. Post-translationally, contains an active site 4-methylidene-imidazol-5-one (MIO), which is formed autocatalytically by cyclization and dehydration of residues Ala-Ser-Gly.

It localises to the cytoplasm. It catalyses the reaction L-histidine = trans-urocanate + NH4(+). It functions in the pathway amino-acid degradation; L-histidine degradation into L-glutamate; N-formimidoyl-L-glutamate from L-histidine: step 1/3. The polypeptide is Histidine ammonia-lyase (Brucella anthropi (strain ATCC 49188 / DSM 6882 / CCUG 24695 / JCM 21032 / LMG 3331 / NBRC 15819 / NCTC 12168 / Alc 37) (Ochrobactrum anthropi)).